The primary structure comprises 427 residues: Cyclin-L1-1 (427 aa).

Positions 258–427 (HRRTSDTNAS…SRDKDRHRRQ (170 aa)) are disordered. Over residues 263 to 276 (DTNASKESPATTVA) the composition is skewed to polar residues. Basic and acidic residues-rich tracts occupy residues 289–311 (QEKD…DDGK), 328–382 (KSEK…DRDR), 390–400 (DRSSGYSDKEK), and 407–421 (RDRG…SRDK).

It belongs to the cyclin family. Cyclin L subfamily.

This is Cyclin-L1-1 (CYCL1-1) from Oryza sativa subsp. japonica (Rice).